The sequence spans 336 residues: m7GpppX diphosphatase (336 aa).

Residues 1-36 (MADTAPQLKRKREQEAEEAETPSTEEKEAGVGNGTS) form a disordered region. A2 bears the N-acetylalanine mark. The nuclear localization signal (NLS) signature appears at 9–12 (KRKR). Phosphoserine is present on S23. N6-acetyllysine is present on residues K137 and K141. Residues 141–153 (KYMRQDLRLIRET) carry the nuclear export sequence (NES) motif. Residues W174, E184, D204, K206, and 267-278 (HYLPSYYHLHVH) each bind substrate. Positions 274 to 278 (HLHVH) match the Histidine triad motif motif. H276 (nucleophile) is an active-site residue.

It belongs to the HIT family. As to quaternary structure, homodimer. Associates with components of the exosome multienzyme ribonuclease complex, such as EXOSC3 and EXOSC4. Interacts with NDOR1.

It is found in the cytoplasm. The protein localises to the nucleus. It catalyses the reaction a 5'-end (N(7)-methyl 5'-triphosphoguanosine)-ribonucleoside in mRNA + H2O = N(7)-methyl-GMP + a 5'-end diphospho-ribonucleoside in mRNA + 2 H(+). The hydrolytic product 7-methylguanosine diphosphate (m7GDP) efficiently inhibits the decapping scavenger activity and acts as a competitive inhibitor in vitro. Inhibited by 2,4-diaminoquinazoline. Decapping scavenger enzyme that catalyzes the cleavage of a residual cap structure following the degradation of mRNAs by the 3'-&gt;5' exosome-mediated mRNA decay pathway. Hydrolyzes cap analog structures like 7-methylguanosine nucleoside triphosphate (m7GpppG) with up to 10 nucleotide substrates (small capped oligoribonucleotides) and specifically releases 5'-phosphorylated RNA fragments and 7-methylguanosine monophosphate (m7GMP). Cleaves cap analog structures like tri-methyl guanosine nucleoside triphosphate (m3(2,2,7)GpppG) with very poor efficiency. Does not hydrolyze unmethylated cap analog (GpppG) and shows no decapping activity on intact m7GpppG-capped mRNA molecules longer than 25 nucleotides. Does not hydrolyze 7-methylguanosine diphosphate (m7GDP) to m7GMP. May also play a role in the 5'-&gt;3 mRNA decay pathway; m7GDP, the downstream product released by the 5'-&gt;3' mRNA mediated decapping activity, may be also converted by DCPS to m7GMP. Binds to m7GpppG and strongly to m7GDP. Plays a role in first intron splicing of pre-mRNAs. Inhibits activation-induced cell death. The protein is m7GpppX diphosphatase (Dcps) of Rattus norvegicus (Rat).